A 144-amino-acid chain; its full sequence is Large ribosomal subunit protein uL15 (144 aa).

The interval 1–53 (MRLNTLSPAEGAKHAPKRVGRGIGSGLGKTGGRGHKGQKSRSGGGVRRGFEGG) is disordered. Residues 21–31 (RGIGSGLGKTG) show a composition bias toward gly residues.

It belongs to the universal ribosomal protein uL15 family. In terms of assembly, part of the 50S ribosomal subunit.

Binds to the 23S rRNA. In Proteus mirabilis (strain HI4320), this protein is Large ribosomal subunit protein uL15.